The following is a 484-amino-acid chain: MSTPPLPDELRRVHMVGIGGAGMSGIARILLDRGAMVSGSDAKESRAVVALRARGAAIRIGHDASSLDLLPGGPTAVVTTHAAIPKTNPELVEARRRAIPIVLRPVVLAKLMAGHTTLMVTGTHGKTTTTSMLIVALQHCGFDPSFAVGGDLGEAGTNAHHGSGECFVAEADESDGSLLEYTPDVAVVTNIEADHLDFFGSAEAYTAVFDAFVERLTPGGALIACVDDPGSAALAERTAALGVRVLRYGSAGGRDLAGALVGWEQQGTGAVAHIQLAGESAPRAMRLSVPGRHMALNALGALLAALQVGADPDTVLDGLAGFEGVRRRFELVGTATGVRVFDDYAHHPTEVAATLAALRAVTDQAGDGRAVVVFQPHLYSRTETFAREFGAALSAADLVFVLDVYGAREQPIAGVSGASIVEHVGVPVTYVPDFSAVAAQVAGAVRPGDVVVTMGAGDVTMLGPEIIAALQARANRTVPGAGAR.

122 to 128 (GTHGKTT) is a binding site for ATP.

The protein belongs to the MurCDEF family.

It localises to the cytoplasm. The enzyme catalyses UDP-N-acetyl-alpha-D-muramate + L-alanine + ATP = UDP-N-acetyl-alpha-D-muramoyl-L-alanine + ADP + phosphate + H(+). It functions in the pathway cell wall biogenesis; peptidoglycan biosynthesis. Its function is as follows. Cell wall formation. The protein is UDP-N-acetylmuramate--L-alanine ligase of Mycobacterium sp. (strain JLS).